A 638-amino-acid polypeptide reads, in one-letter code: Epithelial sodium channel subunit beta (638 aa).

Topologically, residues 1 to 50 (MPVKKYLLKCLHRLQKGPGYTYKELLVWYCNNTNTHGPKRIICEGPKKKA) are cytoplasmic. The chain crosses the membrane as a helical span at residues 51 to 71 (MWFLLTLLFACLVCWQWGVFI). The Extracellular portion of the chain corresponds to 72–530 (QTYLSWEVSV…GGQFGFWMGG (459 aa)). Cystine bridges form between Cys-98-Cys-270, Cys-182-Cys-187, Cys-194-Cys-201, Cys-247-Cys-254, Cys-359-Cys-446, Cys-384-Cys-442, Cys-388-Cys-438, Cys-397-Cys-424, and Cys-399-Cys-413. 2 N-linked (GlcNAc...) asparagine glycosylation sites follow: Asn-135 and Asn-141. Residues 531-551 (SVLCLIEFGEIIIDFIWITVI) traverse the membrane as a helical segment. Over 552–638 (KLVASCKGLR…MESDSEVEAI (87 aa)) the chain is Cytoplasmic. The tract at residues 598–620 (NAEVYPDQQTLPIPGTPPPNYDS) is disordered. The short motif at 614 to 618 (PPPNY) is the PY motif; recruits WW domain-containing proteins and is thereby required for ubiquitination and inhibition of the channel by NEDD4 and NEDD4L element. Phosphoserine occurs at positions 631 and 633.

This sequence belongs to the amiloride-sensitive sodium channel (TC 1.A.6) family. SCNN1B subfamily. In terms of assembly, component of the heterotrimeric epithelial sodium channel (ENaC) composed of an alpha/SCNN1A, a beta/SCNN1B and a gamma/SCNN1G subunit. Interacts with WWP1 (via WW domains). Interacts with WWP2 (via WW domains). Interacts with the full-length immature form of PCSK9 (pro-PCSK9). Interacts (N-glycosylated) with BPIFA1; the interaction is direct and inhibits the proteolytic processing of SCNN1A and SCNN1G and the activation of ENaC. Post-translationally, ubiquitinated. Can be ubiquitinated at multiple sites and undergo monoubiquitination and polyubiquitination. Ubiquitination by NEDD4 or NEDD4L inhibits the ENaC channel through endocytosis, intracellular retention and degradation of its individual subunits. However, some studies could not confirm the ubiquitination of this subunit of the ENaC. N-glycosylated. N-glycosylation is required for interaction with BPIFA1. In terms of processing, phosphorylated on serine and threonine residues. Aldosterone and insulin increase the basal level of phosphorylation. As to expression, expressed in lung and epididymis. In the caput region of the epididymis, expressed at the luminal and basolateral surfaces of the ducts and in the smooth muscle coat. In the caudal region of the epididymis, expressed along the luminal border but not continuously, in the smooth muscle coat, in the interstitial muscle tissue and in sperm in the caudal lumen.

Its subcellular location is the apical cell membrane. The protein localises to the cytoplasmic vesicle membrane. The enzyme catalyses Na(+)(in) = Na(+)(out). Its activity is regulated as follows. Originally identified and characterized by its inhibition by the diuretic drug amiloride. Functionally, this is one of the three pore-forming subunits of the heterotrimeric epithelial sodium channel (ENaC), a critical regulator of sodium balance and fluid homeostasis. ENaC operates in epithelial tissues, where it mediates the electrodiffusion of sodium ions from extracellular fluid through the apical membrane of cells, with water following osmotically. It plays a key role in maintaining sodium homeostasis through electrogenic sodium reabsorption in the kidneys. This subunit is not essential for ENaC function in airway surface liquid homeostasis and proper mucus clearance. In Rattus norvegicus (Rat), this protein is Epithelial sodium channel subunit beta.